Here is a 103-residue protein sequence, read N- to C-terminus: Carboxysome shell protein CcmK2 (103 aa).

One can recognise a BMC domain in the interval 4–90; it reads AVGMIETRGF…PHENLEYVLP (87 aa).

The protein belongs to the bacterial microcompartments protein family. CcmK subfamily. Homohexamer, might also make dodecamers. Interacts with full-length CcmM. Forms mixed heterohexamers of all possible stoichiometries with CcmK1, which might form dodecamers. Only very weak interactions with CcmK3 and CcmK4 were seen.

Its subcellular location is the carboxysome. In terms of biological role, one of the shell proteins of the carboxysome, a polyhedral inclusion where RuBisCO (ribulose bisphosphate carboxylase, rbcL-rbcS) is sequestered. The central pore probably regulates metabolite flux. Hexamers make sheets that form the facets of the polyhedral carboxysome. This Synechocystis sp. (strain ATCC 27184 / PCC 6803 / Kazusa) protein is Carboxysome shell protein CcmK2.